The chain runs to 418 residues: MNIFEELKARGLVFQTTDEQALVKALTEGQVSYYTGYDPTADSLHLGHLVAILTSRRLQLAGHKPYALVGGATGLIGDPSFKDAERSLQTKETVLEWSDKIKGQLSTFLDFENGDNKAELVNNYDWFSQISFIDFLRDVGKYFTVNYMMSKDSVKKRIETGISYTEFAYQIMQGYDFYELNDKHNVTLQIGGSDQWGNMTAGTELLRKKADKTGHVMTVPLITDSTGKKFGKSEGNAVWLDADKTSPYEMYQFWLNVMDDDAVRFLKIFTFLSLDEIAEIESEFNAARHERLAQKTLAREVVTLVHGEEAYKQALNITEQLFAGNIKNLSANELKQGLSNVPNYHVQSEDSLNLVDMLVTAGISPSKRQAREDVQNGAIYINGDRIQDLDYQLSNDDKIDDQLTVIRRGKKKYAVLTY.

Residue Tyr-34 coordinates L-tyrosine. The short motif at 39–48 (PTADSLHLGH) is the 'HIGH' region element. L-tyrosine is bound by residues Tyr-169 and Gln-173. A 'KMSKS' region motif is present at residues 229–233 (KFGKS). Lys-232 contributes to the ATP binding site. The S4 RNA-binding domain occupies 352–418 (LNLVDMLVTA…GKKKYAVLTY (67 aa)).

The protein belongs to the class-I aminoacyl-tRNA synthetase family. TyrS type 1 subfamily. In terms of assembly, homodimer.

It is found in the cytoplasm. The enzyme catalyses tRNA(Tyr) + L-tyrosine + ATP = L-tyrosyl-tRNA(Tyr) + AMP + diphosphate + H(+). Catalyzes the attachment of tyrosine to tRNA(Tyr) in a two-step reaction: tyrosine is first activated by ATP to form Tyr-AMP and then transferred to the acceptor end of tRNA(Tyr). The sequence is that of Tyrosine--tRNA ligase from Streptococcus pyogenes serotype M18 (strain MGAS8232).